The primary structure comprises 184 residues: ATP-dependent protease subunit HslV (184 aa).

Residue T2 is part of the active site. Residues G157, C160, and T163 each coordinate Na(+).

This sequence belongs to the peptidase T1B family. HslV subfamily. In terms of assembly, a double ring-shaped homohexamer of HslV is capped on each side by a ring-shaped HslU homohexamer. The assembly of the HslU/HslV complex is dependent on binding of ATP.

The protein localises to the cytoplasm. It catalyses the reaction ATP-dependent cleavage of peptide bonds with broad specificity.. With respect to regulation, allosterically activated by HslU binding. Its function is as follows. Protease subunit of a proteasome-like degradation complex believed to be a general protein degrading machinery. This Vibrio vulnificus (strain CMCP6) protein is ATP-dependent protease subunit HslV.